A 593-amino-acid polypeptide reads, in one-letter code: Solute carrier family 13 member 2 (593 aa).

A run of 4 helical transmembrane segments spans residues 11–31, 53–73, 86–106, and 121–141; these read YRMY…PILV, ALPL…MGIM, TNVL…WNLH, and PALL…WISN. A compositionally biased stretch (polar residues) spans 164 to 184; sequence SNVEEGSDNPTFELQEPSPQK. Positions 164–204 are disordered; the sequence is SNVEEGSDNPTFELQEPSPQKETSKVDEKDNGQAQPLPAVP. Over residues 185 to 194 the composition is skewed to basic and acidic residues; the sequence is ETSKVDEKDN. 8 helical membrane passes run 221–241, 270–290, 327–347, 369–389, 451–471, 485–505, 514–534, and 543–563; these read GMSL…LTGT, FAFP…QILF, PMSF…LLWF, VMVS…MVPS, LMPL…LLVA, LLLP…LYVM, LAFM…FGGL, and GIML…SWGV.

It belongs to the SLC13A/DASS transporter (TC 2.A.47) family. NADC subfamily. Abundant in kidney and small intestine.

The protein resides in the apical cell membrane. It carries out the reaction succinate(out) + 3 Na(+)(out) = succinate(in) + 3 Na(+)(in). The catalysed reaction is fumarate(out) + 3 Na(+)(out) = fumarate(in) + 3 Na(+)(in). It catalyses the reaction 2-oxoglutarate(out) + 3 Na(+)(out) = 2-oxoglutarate(in) + 3 Na(+)(in). Li(+) decreases succinate transport in the presence of Na(+), by competing at one of the three cation binding sites. Functionally, low-affinity sodium-dicarboxylate cotransporter, that mediates the entry of citric acid cycle intermediates, such as succinate, citrate, fumarate and alpha-ketoglutarate (2-oxoglutarate) into the small intestine and renal proximal tubule. Transports the dicarboxylate into the cell with a probable stoichiometry of 3 Na(+) for 1 divalent dicarboxylate, rendering the process electrogenic. Citrate is transported in protonated form as a divalent anion, rather than the trivalent form which is normally found in blood. Has a critical role in renal dicarboxylate transport. The polypeptide is Solute carrier family 13 member 2 (SLC13A2) (Oryctolagus cuniculus (Rabbit)).